We begin with the raw amino-acid sequence, 277 residues long: Shikimate dehydrogenase (NADP(+)) (277 aa).

Shikimate contacts are provided by residues 17-19 (SRS) and Thr-64. The active-site Proton acceptor is the Lys-68. Positions 88 and 103 each coordinate shikimate. NADP(+)-binding positions include 128–132 (GAGGS), 152–157 (NRTLDR), and Leu-217. Tyr-219 serves as a coordination point for shikimate. Residue Gly-240 participates in NADP(+) binding.

This sequence belongs to the shikimate dehydrogenase family. Homodimer.

It carries out the reaction shikimate + NADP(+) = 3-dehydroshikimate + NADPH + H(+). It participates in metabolic intermediate biosynthesis; chorismate biosynthesis; chorismate from D-erythrose 4-phosphate and phosphoenolpyruvate: step 4/7. In terms of biological role, involved in the biosynthesis of the chorismate, which leads to the biosynthesis of aromatic amino acids. Catalyzes the reversible NADPH linked reduction of 3-dehydroshikimate (DHSA) to yield shikimate (SA). The protein is Shikimate dehydrogenase (NADP(+)) of Rhodopseudomonas palustris (strain BisB18).